We begin with the raw amino-acid sequence, 376 residues long: Branched-chain-amino-acid aminotransferase, cytosolic (376 aa).

At lysine 202 the chain carries N6-(pyridoxal phosphate)lysine.

Belongs to the class-IV pyridoxal-phosphate-dependent aminotransferase family. Pyridoxal 5'-phosphate serves as cofactor.

The protein resides in the cytoplasm. The enzyme catalyses L-leucine + 2-oxoglutarate = 4-methyl-2-oxopentanoate + L-glutamate. It catalyses the reaction L-isoleucine + 2-oxoglutarate = (S)-3-methyl-2-oxopentanoate + L-glutamate. It carries out the reaction L-valine + 2-oxoglutarate = 3-methyl-2-oxobutanoate + L-glutamate. The catalysed reaction is a 2-oxocarboxylate + L-methionine = 4-methylsulfanyl-2-oxobutanoate + an L-alpha-amino acid. It functions in the pathway amino-acid biosynthesis; L-isoleucine biosynthesis; L-isoleucine from 2-oxobutanoate: step 4/4. Its pathway is amino-acid biosynthesis; L-leucine biosynthesis; L-leucine from 3-methyl-2-oxobutanoate: step 4/4. It participates in amino-acid biosynthesis; L-valine biosynthesis; L-valine from pyruvate: step 4/4. The protein operates within amino-acid biosynthesis; L-methionine biosynthesis via salvage pathway; L-methionine from S-methyl-5-thio-alpha-D-ribose 1-phosphate: step 6/6. Cytoplasmic isozyme of branched-chain-amino-acid aminotransferase, which catalyzes the first reaction in the catabolism of the essential branched chain amino acids (BCAAs) leucine, isoleucine, and valine. Catalyzes the formation of methionine from 2-keto-4-methylthiobutyrate (KMTB) in the methionine salvage pathway primarily using BCAAs (leucine, isoleucine, and valine) as well as lysine and proline as the amino donors. Involved in cell cycle regulation. This Saccharomyces cerevisiae (strain ATCC 204508 / S288c) (Baker's yeast) protein is Branched-chain-amino-acid aminotransferase, cytosolic.